The following is a 244-amino-acid chain: tRNA (guanine-N(7)-)-methyltransferase (244 aa).

Residues 1 to 10 (MSDTPQSPAQ) show a composition bias toward polar residues. Positions 1–20 (MSDTPQSPAQDSLAEHDEAR) are disordered. Residues E74, E99, D126, and D149 each contribute to the S-adenosyl-L-methionine site. D149 is an active-site residue. Substrate-binding positions include K153, D185, and 222-225 (TKFE).

This sequence belongs to the class I-like SAM-binding methyltransferase superfamily. TrmB family.

It catalyses the reaction guanosine(46) in tRNA + S-adenosyl-L-methionine = N(7)-methylguanosine(46) in tRNA + S-adenosyl-L-homocysteine. It participates in tRNA modification; N(7)-methylguanine-tRNA biosynthesis. In terms of biological role, catalyzes the formation of N(7)-methylguanine at position 46 (m7G46) in tRNA. This Pseudomonas paraeruginosa (strain DSM 24068 / PA7) (Pseudomonas aeruginosa (strain PA7)) protein is tRNA (guanine-N(7)-)-methyltransferase.